The following is a 796-amino-acid chain: Serine/threonine-protein kinase ATG1 (796 aa).

Residues 9-304 (YVVGAEIGRG…FQEFFNDPVI (296 aa)) form the Protein kinase domain. ATP is bound by residues 15 to 23 (IGRGSFANV) and Lys38. Asp155 functions as the Proton acceptor in the catalytic mechanism. Over residues 360–370 (LEEEDEEEDQD) the composition is skewed to acidic residues. Disordered regions lie at residues 360–382 (LEEE…IQHM), 389–408 (LLNK…RREL), and 450–480 (PYTR…KVPI). The span at 389–403 (LLNKTTQKQTEVQSQ) shows a compositional bias: polar residues. The segment covering 453-470 (RRYSSSSRSSSTGSNQRR) has biased composition (low complexity).

Belongs to the protein kinase superfamily. Ser/Thr protein kinase family. APG1/unc-51/ULK1 subfamily. As to quaternary structure, homodimer. Forms a ternary complex with ATG13 and ATG17.

Its subcellular location is the cytoplasm. The protein localises to the preautophagosomal structure membrane. It catalyses the reaction L-seryl-[protein] + ATP = O-phospho-L-seryl-[protein] + ADP + H(+). The enzyme catalyses L-threonyl-[protein] + ATP = O-phospho-L-threonyl-[protein] + ADP + H(+). Functionally, serine/threonine protein kinase involved in the cytoplasm to vacuole transport (Cvt) and found to be essential in autophagy, where it is required for the formation of autophagosomes. Involved in the clearance of protein aggregates which cannot be efficiently cleared by the proteasome. Required for selective autophagic degradation of the nucleus (nucleophagy) as well as for mitophagy which contributes to regulate mitochondrial quantity and quality by eliminating the mitochondria to a basal level to fulfill cellular energy requirements and preventing excess ROS production. Also involved in endoplasmic reticulum-specific autophagic process, in selective removal of ER-associated degradation (ERAD) substrates. Plays a key role in ATG9 and ATG23 cycling through the pre-autophagosomal structure and is necessary to promote ATG18 binding to ATG9 through phosphorylation of ATG9. Catalyzes phosphorylation of ATG4, decreasing the interaction between ATG4 and ATG8 and impairing deconjugation of PE-conjugated forms of ATG8. This is Serine/threonine-protein kinase ATG1 from Komagataella pastoris (Yeast).